A 349-amino-acid chain; its full sequence is Homeobox-leucine zipper protein HOX7 (349 aa).

The interval 42–186 (RATRRDEQDD…PKQKSDLANR (145 aa)) is disordered. Polar residues-rich tracts occupy residues 89–99 (SAETGSANSEM) and 121–135 (SSPS…RQQV). The homeobox DNA-binding region spans 150–209 (GARKKLRLSKEQSSFLEDSFKEHSTLTPKQKSDLANRLNLRPRQVEVWFQNRRARTKLKQ). Residues 167–183 (DSFKEHSTLTPKQKSDL) show a composition bias toward basic and acidic residues. The segment at 208-252 (KQTEVDCEHLKRCCERLTRENRRLQREVAELRGALRTTTSSYPPL) is leucine-zipper.

Belongs to the HD-ZIP homeobox family. Class II subfamily. Homodimer. May form a heterodimer with HOX1, HOX2 or HOX3. As to expression, expressed in seedlings, roots, leaves, nodes, internodes, flowers and embryo.

It is found in the nucleus. Probable transcription factor that binds to the DNA sequence 5'-CAAT[GC]ATTG-3'. The chain is Homeobox-leucine zipper protein HOX7 (HOX7) from Oryza sativa subsp. indica (Rice).